The following is a 127-amino-acid chain: Translation initiation factor 5A (127 aa).

Residue Lys-35 is modified to Hypusine.

This sequence belongs to the eIF-5A family.

The protein resides in the cytoplasm. Functions by promoting the formation of the first peptide bond. This Methanospirillum hungatei JF-1 (strain ATCC 27890 / DSM 864 / NBRC 100397 / JF-1) protein is Translation initiation factor 5A.